A 202-amino-acid polypeptide reads, in one-letter code: Large ribosomal subunit protein bL25 (202 aa).

The interval 180–202 is disordered; that stretch reads PKQEAFEEDAEPSPGEEPEGENQ. Positions 185–202 are enriched in acidic residues; sequence FEEDAEPSPGEEPEGENQ.

It belongs to the bacterial ribosomal protein bL25 family. CTC subfamily. Part of the 50S ribosomal subunit; part of the 5S rRNA/L5/L18/L25 subcomplex. Contacts the 5S rRNA. Binds to the 5S rRNA independently of L5 and L18.

Its function is as follows. This is one of the proteins that binds to the 5S RNA in the ribosome where it forms part of the central protuberance. The chain is Large ribosomal subunit protein bL25 from Bacillus velezensis (strain DSM 23117 / BGSC 10A6 / LMG 26770 / FZB42) (Bacillus amyloliquefaciens subsp. plantarum).